Reading from the N-terminus, the 238-residue chain is tRNA (guanine-N(7)-)-methyltransferase (238 aa).

Residues Glu68, Glu93, Asp120, and Asp143 each coordinate S-adenosyl-L-methionine. Asp143 is an active-site residue. Substrate contacts are provided by residues Lys147, Asp179, and 216–219 (TKFE).

The protein belongs to the class I-like SAM-binding methyltransferase superfamily. TrmB family.

It catalyses the reaction guanosine(46) in tRNA + S-adenosyl-L-methionine = N(7)-methylguanosine(46) in tRNA + S-adenosyl-L-homocysteine. The protein operates within tRNA modification; N(7)-methylguanine-tRNA biosynthesis. In terms of biological role, catalyzes the formation of N(7)-methylguanine at position 46 (m7G46) in tRNA. This Shewanella sp. (strain MR-4) protein is tRNA (guanine-N(7)-)-methyltransferase.